A 441-amino-acid polypeptide reads, in one-letter code: Peroxisome proliferator-activated receptor delta (441 aa).

The disordered stretch occupies residues 1–58 (MEQPPGEAAEVREEEEKKEVAEAEGAPELNGGPERSLPSSSYTDLSRSSSPPSLLDQL). Residues 9–21 (AEVREEEEKKEVA) are compositionally biased toward basic and acidic residues. The segment covering 36–55 (SLPSSSYTDLSRSSSPPSLL) has biased composition (low complexity). The segment at residues 70–145 (LNMECRVCGD…LGMSHNAIRF (76 aa)) is a DNA-binding region (nuclear receptor). 2 NR C4-type zinc fingers span residues 74–94 (CRVC…CEGC) and 111–133 (CERI…FQKC). The region spanning 211-439 (FVIHDIETLW…HPLLQEIYKD (229 aa)) is the NR LBD domain.

Belongs to the nuclear hormone receptor family. NR1 subfamily. Heterodimer with the retinoid X receptor. Interacts (via domain NR LBD) with CRY1 and CRY2 in a ligand-dependent manner. In terms of processing, 'Lys-48'-linked polyubiquitinated; leading to proteasomal degradation. Deubiquitinated and stabilized by OTUD3.

Its subcellular location is the nucleus. Ligand-activated transcription factor key mediator of energy metabolism in adipose tissues. Receptor that binds peroxisome proliferators such as hypolipidemic drugs and fatty acids. Has a preference for poly-unsaturated fatty acids, such as gamma-linoleic acid and eicosapentanoic acid. Once activated by a ligand, the receptor binds to promoter elements of target genes. Regulates the peroxisomal beta-oxidation pathway of fatty acids. Functions as a transcription activator for the acyl-CoA oxidase gene. Decreases expression of NPC1L1 once activated by a ligand. The chain is Peroxisome proliferator-activated receptor delta (PPARD) from Canis lupus familiaris (Dog).